Reading from the N-terminus, the 1119-residue chain is Transcriptional repressor NF-X1 homolog (1119 aa).

The interval 1–214 (MADTEGTSSS…EPLTEEETKI (214 aa)) is disordered. Over residues 7 to 17 (TSSSIPTSTNS) the composition is skewed to low complexity. A compositionally biased stretch (basic residues) spans 18–29 (SRHRASRGRGGR). The span at 84-98 (ANFTFNPNAATFNPA) shows a compositional bias: low complexity. The segment covering 113–128 (GASTHSNQNSRQQEPS) has biased composition (polar residues). Basic and acidic residues predominate over residues 143–154 (RQLEIQEQRGDS). Over residues 157–167 (QNQSRQNNRNQ) the composition is skewed to low complexity. Positions 174 to 193 (ANQQNKSVQNPSRNPGNSRR) are enriched in polar residues. Basic and acidic residues predominate over residues 198-214 (RRREQKEEPLTEEETKI). The segment at 235–287 (CAICYTRITTRQGVWSCKTCYHIFHISTGCITDWARSSRDKEGANTWRCPTCQ) adopts an RING-type; degenerate zinc-finger fold. 9 consecutive NF-X1-type zinc fingers follow at residues 330–348 (CPHP…ECKL), 383–402 (CGQH…ECTV), 439–458 (CGIH…ECET), 500–523 (CGTP…PCNL), 565–584 (CGMH…FCLQ), 592–611 (CGIH…PCLQ), 649–668 (CDHS…PCTQ), 703–726 (CGVH…KCTK), and 735–756 (CEHP…PCKA). An R3H domain is found at 867–937 (IDFVKSVEKI…KRSIVLTAVR (71 aa)). Disordered regions lie at residues 1024 to 1047 (VDSD…PKDW) and 1078 to 1119 (AAKK…ELLE). Polar residues predominate over residues 1032 to 1041 (NVPTTSNLVS). Over residues 1086–1097 (PTWEDQCDEDAP) the composition is skewed to acidic residues.

It belongs to the NFX1 family.

The protein resides in the nucleus. In terms of biological role, may play a role in transcription regulation. This is Transcriptional repressor NF-X1 homolog (nfx-1) from Caenorhabditis elegans.